A 454-amino-acid polypeptide reads, in one-letter code: tRNA modification GTPase MnmE (454 aa).

(6S)-5-formyl-5,6,7,8-tetrahydrofolate contacts are provided by R23, E80, and K120. The TrmE-type G domain occupies 216–377 (GMKVVIAGRP…LRNHLKQSMG (162 aa)). Residue N226 participates in K(+) binding. GTP-binding positions include 226-231 (NAGKSS), 245-251 (TDIAGTT), 270-273 (DTAG), 335-338 (NKAD), and 358-360 (SAR). S230 provides a ligand contact to Mg(2+). K(+) is bound by residues T245, I247, and T250. T251 provides a ligand contact to Mg(2+). K454 is a binding site for (6S)-5-formyl-5,6,7,8-tetrahydrofolate.

It belongs to the TRAFAC class TrmE-Era-EngA-EngB-Septin-like GTPase superfamily. TrmE GTPase family. In terms of assembly, homodimer. Heterotetramer of two MnmE and two MnmG subunits. K(+) serves as cofactor.

It localises to the cytoplasm. Exhibits a very high intrinsic GTPase hydrolysis rate. Involved in the addition of a carboxymethylaminomethyl (cmnm) group at the wobble position (U34) of certain tRNAs, forming tRNA-cmnm(5)s(2)U34. In Escherichia coli O139:H28 (strain E24377A / ETEC), this protein is tRNA modification GTPase MnmE.